Consider the following 381-residue polypeptide: Probable 26S proteasome regulatory subunit rpn9 (381 aa).

The region spanning 177-343 (QYYRHCLLYL…QIVTISSVQS (167 aa)) is the PCI domain.

Belongs to the proteasome subunit S11 family.

In terms of biological role, acts as a regulatory subunit of the 26S proteasome which is involved in the ATP-dependent degradation of ubiquitinated proteins. The chain is Probable 26S proteasome regulatory subunit rpn9 (rpn9) from Schizosaccharomyces pombe (strain 972 / ATCC 24843) (Fission yeast).